Reading from the N-terminus, the 466-residue chain is Ribulose bisphosphate carboxylase large chain (466 aa).

The residue at position 5 (Lys-5) is an N6,N6,N6-trimethyllysine. Positions 114 and 164 each coordinate substrate. The active-site Proton acceptor is Lys-166. Lys-168 contacts substrate. Positions 192, 194, and 195 each coordinate Mg(2+). Lys-192 carries the N6-carboxylysine modification. His-285 serves as the catalytic Proton acceptor. Substrate contacts are provided by Arg-286, His-318, and Ser-370.

It belongs to the RuBisCO large chain family. Type I subfamily. In terms of assembly, heterohexadecamer of 8 large chains and 8 small chains; disulfide-linked. The disulfide link is formed within the large subunit homodimers. The cofactor is Mg(2+). The disulfide bond which can form in the large chain dimeric partners within the hexadecamer appears to be associated with oxidative stress and protein turnover.

Its subcellular location is the plastid. It localises to the chloroplast. It catalyses the reaction 2 (2R)-3-phosphoglycerate + 2 H(+) = D-ribulose 1,5-bisphosphate + CO2 + H2O. The catalysed reaction is D-ribulose 1,5-bisphosphate + O2 = 2-phosphoglycolate + (2R)-3-phosphoglycerate + 2 H(+). Functionally, ruBisCO catalyzes two reactions: the carboxylation of D-ribulose 1,5-bisphosphate, the primary event in carbon dioxide fixation, as well as the oxidative fragmentation of the pentose substrate in the photorespiration process. Both reactions occur simultaneously and in competition at the same active site. This Hedera helix (English ivy) protein is Ribulose bisphosphate carboxylase large chain.